Here is a 575-residue protein sequence, read N- to C-terminus: Proline--tRNA ligase 1 (575 aa).

Belongs to the class-II aminoacyl-tRNA synthetase family. ProS type 1 subfamily. In terms of assembly, homodimer.

The protein resides in the cytoplasm. The enzyme catalyses tRNA(Pro) + L-proline + ATP = L-prolyl-tRNA(Pro) + AMP + diphosphate. Functionally, catalyzes the attachment of proline to tRNA(Pro) in a two-step reaction: proline is first activated by ATP to form Pro-AMP and then transferred to the acceptor end of tRNA(Pro). As ProRS can inadvertently accommodate and process non-cognate amino acids such as alanine and cysteine, to avoid such errors it has two additional distinct editing activities against alanine. One activity is designated as 'pretransfer' editing and involves the tRNA(Pro)-independent hydrolysis of activated Ala-AMP. The other activity is designated 'posttransfer' editing and involves deacylation of mischarged Ala-tRNA(Pro). The misacylated Cys-tRNA(Pro) is not edited by ProRS. The chain is Proline--tRNA ligase 1 from Anaeromyxobacter dehalogenans (strain 2CP-C).